Consider the following 241-residue polypeptide: Probable transcriptional regulatory protein Neut_0281 (241 aa).

Belongs to the TACO1 family.

Its subcellular location is the cytoplasm. The polypeptide is Probable transcriptional regulatory protein Neut_0281 (Nitrosomonas eutropha (strain DSM 101675 / C91 / Nm57)).